The chain runs to 648 residues: Penicillin-binding protein PbpB (648 aa).

The segment at 1–35 (MSRRGDRPRTPAQPRKKARVDQPRSARTRRTRVSE) is disordered. The chain crosses the membrane as a helical span at residues 52–72 (GNLAILAVLVIAAVQLFMLQV). The active-site Acyl-ester intermediate is serine 355.

Belongs to the transpeptidase family. As to quaternary structure, interacts with Wag31.

Its subcellular location is the cell membrane. In Mycolicibacterium smegmatis (strain ATCC 700084 / mc(2)155) (Mycobacterium smegmatis), this protein is Penicillin-binding protein PbpB (pbpB).